Here is a 156-residue protein sequence, read N- to C-terminus: 1-methylthio-D-xylulose 5-phosphate methylsulfurylase (156 aa).

The 68-residue stretch at 55–122 (YFEVGPGGHS…ADEALGFLCM (68 aa)) folds into the Cupin type-2 domain. Residues glutamate 67, histidine 69, histidine 73, and histidine 107 each contribute to the Mn(2+) site. Residue cysteine 121 is part of the active site.

The enzyme catalyses S-methyl-1-thio-D-xylulose 5-phosphate + glutathione = S-(methylsulfanyl)glutathione + 1-deoxy-D-xylulose 5-phosphate. It catalyses the reaction S-(methylsulfanyl)glutathione + AH2 = methanethiol + glutathione + A. The protein operates within amino-acid biosynthesis; L-methionine biosynthesis via salvage pathway. It functions in the pathway metabolic intermediate biosynthesis; 1-deoxy-D-xylulose 5-phosphate biosynthesis. In terms of biological role, catalyzes the formation of S-(methylsulfanyl)glutathione and 1-deoxy-D-xylulose 5-phosphate (DXP) from 1-methylthioxylulose 5-phosphate (MTXu-5P). The S-(methylsulfanyl)glutathione is reductively cleaved to relase methanethiol in a second reaction. Involved in the MTA-isoprenoid shunt of the methionine salvage pathway. This Rhodospirillum rubrum (strain ATCC 11170 / ATH 1.1.1 / DSM 467 / LMG 4362 / NCIMB 8255 / S1) protein is 1-methylthio-D-xylulose 5-phosphate methylsulfurylase.